Consider the following 153-residue polypeptide: Large ribosomal subunit protein uL15 (153 aa).

The disordered stretch occupies residues 1–42 (MKLNTIKPGIGSAKPKRRVGRGIGSGLGKTCGRGHKGQKSRA). Over residues 21-31 (RGIGSGLGKTC) the composition is skewed to gly residues.

The protein belongs to the universal ribosomal protein uL15 family. Part of the 50S ribosomal subunit.

In terms of biological role, binds to the 23S rRNA. In Nitrosomonas europaea (strain ATCC 19718 / CIP 103999 / KCTC 2705 / NBRC 14298), this protein is Large ribosomal subunit protein uL15.